An 81-amino-acid polypeptide reads, in one-letter code: Elicitor peptide 4 (81 aa).

A propeptide spanning residues 1 to 54 is cleaved from the precursor; that stretch reads MERGVSYYLWIPFKFIHQTFGSLLLKLLGLRSPSDHSFPEDGEEEVKVVEVSSR. The interval 57 to 81 is disordered; it reads PGKKNVLKKSRESSGKPGGTNKKPF.

Belongs to the brassicaceae elicitor peptide family.

Its function is as follows. Elicitor of plant defense. This Arabidopsis thaliana (Mouse-ear cress) protein is Elicitor peptide 4 (PEP4).